Here is a 227-residue protein sequence, read N- to C-terminus: Cytidylate kinase (227 aa).

G12–T20 is a binding site for ATP.

Belongs to the cytidylate kinase family. Type 1 subfamily.

The protein localises to the cytoplasm. The enzyme catalyses CMP + ATP = CDP + ADP. The catalysed reaction is dCMP + ATP = dCDP + ADP. In Salmonella paratyphi B (strain ATCC BAA-1250 / SPB7), this protein is Cytidylate kinase.